The following is a 65-amino-acid chain: Large ribosomal subunit protein bL35 (65 aa).

The protein belongs to the bacterial ribosomal protein bL35 family.

The sequence is that of Large ribosomal subunit protein bL35 from Oleidesulfovibrio alaskensis (strain ATCC BAA-1058 / DSM 17464 / G20) (Desulfovibrio alaskensis).